We begin with the raw amino-acid sequence, 529 residues long: 3-ketoacyl-CoA synthase 20 (529 aa).

The interval 1-22 is disordered; sequence MSHNQNQPHRPVPVHVTNAEPN. Transmembrane regions (helical) follow at residues 52–72 and 84–104; these read LYIL…SFTI and FHFL…TAYF. An FAE domain is found at 103 to 396; that stretch reads YFTTRPRRVF…FFATLVARKV (294 aa). Catalysis depends on residues Cys247, His326, His415, His419, and Asn452.

The protein belongs to the thiolase-like superfamily. Chalcone/stilbene synthases family. As to expression, expressed in aerial organs. Expressed in leaves, flowers, siliques and stems. Expressed in roots, young seedlings, leaves, flowers and siliques.

It localises to the membrane. The catalysed reaction is a very-long-chain acyl-CoA + malonyl-CoA + H(+) = a very-long-chain 3-oxoacyl-CoA + CO2 + CoA. It participates in lipid metabolism; fatty acid biosynthesis. With respect to regulation, inhibited by K3 herbicides such as alachlor, allidochlor, anilofos, cafenstrole, fentrazamide and flufenacet. Strongly inhibited by metazachlor and only slightly by mefluidide. Its function is as follows. Mediates the synthesis of VLCFAs from 22 to 26 carbons in length (e.g. C22, C24, C26). Functionally redundant with KCS2 in the two-carbon elongation of C22 fatty acids that is required for cuticular wax and root suberin biosynthesis. This is 3-ketoacyl-CoA synthase 20 from Arabidopsis thaliana (Mouse-ear cress).